The primary structure comprises 361 residues: Protein RecA (361 aa).

Residue 77–84 participates in ATP binding; sequence GPESSGKT.

It belongs to the RecA family.

The protein resides in the cytoplasm. Functionally, can catalyze the hydrolysis of ATP in the presence of single-stranded DNA, the ATP-dependent uptake of single-stranded DNA by duplex DNA, and the ATP-dependent hybridization of homologous single-stranded DNAs. It interacts with LexA causing its activation and leading to its autocatalytic cleavage. This is Protein RecA from Brucella abortus (strain S19).